Here is a 172-residue protein sequence, read N- to C-terminus: Translationally-controlled tumor protein homolog (172 aa).

The TCTP domain maps to 1 to 172; it reads MIIYKDTVTE…FKDGLISEKC (172 aa).

Belongs to the TCTP family.

The protein localises to the cytoplasm. In terms of biological role, involved in calcium binding and microtubule stabilization. The protein is Translationally-controlled tumor protein homolog (tpt1) of Xenopus tropicalis (Western clawed frog).